A 451-amino-acid polypeptide reads, in one-letter code: Transcription factor TGAL8 (451 aa).

Over residues 1–22 (MAYPSTSGMIQASSSLHGSITR) the composition is skewed to polar residues. Disordered stretches follow at residues 1–32 (MAYP…DMPS) and 70–151 (FPSQ…PKTL). Residues 141–150 (KGPKTPDPKT) are compositionally biased toward basic and acidic residues. The region spanning 147–191 (DPKTLRRLAQNREAARKSRLRKKAYIQQLETGRIRLAHLEQEIQF) is the bZIP domain. A basic motif region spans residues 149-169 (KTLRRLAQNREAARKSRLRKK). The tract at residues 175-189 (LETGRIRLAHLEQEI) is leucine-zipper. One can recognise a DOG1 domain in the interval 208 to 444 (AALFNLEYER…RALALFWTTT (237 aa)).

The protein belongs to the bZIP family. As to quaternary structure, interacts with NPR5/NH4, NH5.1 and NH5.2.

Its subcellular location is the nucleus. Its function is as follows. Transcriptional regulator involved in defense response. This is Transcription factor TGAL8 from Oryza sativa subsp. japonica (Rice).